The following is a 450-amino-acid chain: Adenylosuccinate lyase (450 aa).

N(6)-(1,2-dicarboxyethyl)-AMP is bound by residues 9–10 (RY), 75–77 (HHD), and 101–102 (TS). Catalysis depends on His149, which acts as the Proton donor/acceptor. Gln223 contacts N(6)-(1,2-dicarboxyethyl)-AMP. The active-site Proton donor/acceptor is the Ser273. N(6)-(1,2-dicarboxyethyl)-AMP is bound by residues Ser274, 279 to 281 (KRN), and 318 to 322 (SVERV).

The protein belongs to the lyase 1 family. Adenylosuccinate lyase subfamily. In terms of assembly, homotetramer. Residues from neighboring subunits contribute catalytic and substrate-binding residues to each active site.

The enzyme catalyses N(6)-(1,2-dicarboxyethyl)-AMP = fumarate + AMP. It carries out the reaction (2S)-2-[5-amino-1-(5-phospho-beta-D-ribosyl)imidazole-4-carboxamido]succinate = 5-amino-1-(5-phospho-beta-D-ribosyl)imidazole-4-carboxamide + fumarate. It participates in purine metabolism; AMP biosynthesis via de novo pathway; AMP from IMP: step 2/2. The protein operates within purine metabolism; IMP biosynthesis via de novo pathway; 5-amino-1-(5-phospho-D-ribosyl)imidazole-4-carboxamide from 5-amino-1-(5-phospho-D-ribosyl)imidazole-4-carboxylate: step 2/2. In terms of biological role, catalyzes two reactions in de novo purine nucleotide biosynthesis. Catalyzes the breakdown of 5-aminoimidazole- (N-succinylocarboxamide) ribotide (SAICAR or 2-[5-amino-1-(5-phospho-beta-D-ribosyl)imidazole-4-carboxamido]succinate) to 5-aminoimidazole-4-carboxamide ribotide (AICAR or 5-amino-1-(5-phospho-beta-D-ribosyl)imidazole-4-carboxamide) and fumarate, and of adenylosuccinate (ADS or N(6)-(1,2-dicarboxyethyl)-AMP) to adenosine monophosphate (AMP) and fumarate. The polypeptide is Adenylosuccinate lyase (purB) (Pyrococcus abyssi (strain GE5 / Orsay)).